The chain runs to 154 residues: MHPAHLLVLLGVCVSLLGAARIPPLPLSLDDFSNLITCANRGSRSWLDYAHYGCFCGSGGSGTPVDDLDRCCQVHDNCFGDAEKLPACNYLFSGPYWNPYSYKCNEGEITCTDDNDECAAFICNCDRTAAICFAGATYNDENFMVTIKKKNICQ.

The signal sequence occupies residues 1–19 (MHPAHLLVLLGVCVSLLGA). Residues 20–27 (ARIPPLPL) constitute a propeptide that is removed on maturation. 7 disulfides stabilise this stretch: Cys38–Cys104, Cys54–Cys153, Cys56–Cys72, Cys71–Cys132, Cys78–Cys125, Cys88–Cys118, and Cys111–Cys123. Ca(2+) is bound by residues Phe55, Gly57, and Gly59. His75 is an active-site residue. Residue Asp76 participates in Ca(2+) binding. Residue Asp126 is part of the active site.

Belongs to the phospholipase A2 family. Group I subfamily. D49 sub-subfamily. Monomer. Requires Ca(2+) as cofactor. In terms of tissue distribution, expressed by the venom gland.

The protein localises to the secreted. The catalysed reaction is a 1,2-diacyl-sn-glycero-3-phosphocholine + H2O = a 1-acyl-sn-glycero-3-phosphocholine + a fatty acid + H(+). Functionally, snake venom phospholipase A2 (PLA2) that shows moderate enzymatic activity and exhibits procoagulant activity. PLA2 catalyzes the calcium-dependent hydrolysis of the 2-acyl groups in 3-sn-phosphoglycerides. The chain is Acidic phospholipase A2 1 from Pseudonaja textilis (Eastern brown snake).